The following is a 176-amino-acid chain: NAD(P)H-quinone oxidoreductase subunit 6, chloroplastic (176 aa).

5 consecutive transmembrane segments (helical) span residues 10–30 (FLLVFLGSGLILGGLGVVLLT), 32–52 (PIYSAFSLGLVLVCISLFYIP), 61–81 (AQLLIYVGAINVLIIFAVMFM), 92–112 (LWTVGDGVTSLLCTSIFVSLI), and 152–172 (FFLPFELISIILLVALIGAIA).

Belongs to the complex I subunit 6 family. In terms of assembly, NDH is composed of at least 16 different subunits, 5 of which are encoded in the nucleus.

The protein resides in the plastid. It is found in the chloroplast thylakoid membrane. The catalysed reaction is a plastoquinone + NADH + (n+1) H(+)(in) = a plastoquinol + NAD(+) + n H(+)(out). It carries out the reaction a plastoquinone + NADPH + (n+1) H(+)(in) = a plastoquinol + NADP(+) + n H(+)(out). Its function is as follows. NDH shuttles electrons from NAD(P)H:plastoquinone, via FMN and iron-sulfur (Fe-S) centers, to quinones in the photosynthetic chain and possibly in a chloroplast respiratory chain. The immediate electron acceptor for the enzyme in this species is believed to be plastoquinone. Couples the redox reaction to proton translocation, and thus conserves the redox energy in a proton gradient. The protein is NAD(P)H-quinone oxidoreductase subunit 6, chloroplastic (ndhG) of Platanus occidentalis (Sycamore).